The following is a 467-amino-acid chain: Zinc finger protein mex-6 (467 aa).

Low complexity-rich tracts occupy residues 1–22 and 179–195; these read MTATSNSAPLAGGSLSSSATAQ and STTRTVPLTSSTPLPTS. 2 disordered regions span residues 1 to 35 and 163 to 209; these read MTATSNSAPLAGGSLSSSATAQPPQPPPGHQQQHP and TNPQ…NRNS. Thr190 is modified (phosphothreonine). The segment covering 196–207 has biased composition (basic and acidic residues); sequence REYETVQRDRNR. 2 consecutive C3H1-type zinc fingers follow at residues 273–302 and 317–347; these read NFKTRLCMTHAAGINPCALGARCKFAHGLK and KYKTKLCKNFARGGSGVCPYGLRCEFVHPSD. Positions 425–451 are disordered; it reads INENDLPPHLRRIRRGNPPVTRSRPSF. At Ser457 the chain carries Phosphoserine.

Interacts (probably when phosphorylated on Thr-190) with plk-1 (via POLO box domain) and plk-2 (via POLO box domain). Phosphorylation on Ser-457 by par-1 promotes localization of the protein to the anterior cytoplasm of the zygote.

Its subcellular location is the cytoplasm. In terms of biological role, functions with mex-5 to affect embryonic viability, establish soma germline asymmetry in embryos and establish plk-1, pie-1, mex-1, and pos-1 asymmetry in embryos. Also affects formation of intestinal cells. The chain is Zinc finger protein mex-6 (mex-6) from Caenorhabditis elegans.